Reading from the N-terminus, the 344-residue chain is MIRVGIVGFGTIGKRIADAVAAQGDMHVSGVLKVTPDYEVLVAAAKGFKVYTLPDRVEKFKKAGIEPAGTIEDLIKASDVIIDASPEDVGAENKEKYYSKFDKPVIFQGGEEAEVAEVSFNALANYDEARGRRYVRVVSCNTTGITRVLTSLMLNGVGIKKARIFIARRGADPKEYKKGPINDVVPNPATVPSHHGPDVKTVLKNVDIVTMAVAVPVTIMHMHMAFLELDGAYPRDAVLEALAKTPRIFLADVGAGFQSLAQIIEYARDLGRPRGDFPEVAIFRDSVTVNGNELYLMYGVHQESIVVPENVDAVRAVLGAMPKWESIKKTDTTLKLFTEGKRYG.

NAD(+) is bound by residues 11–12 and Gly110; that span reads TI. 139–141 lines the D-glyceraldehyde 3-phosphate pocket; sequence SCN. Cys140 functions as the Nucleophile in the catalytic mechanism. Arg169 provides a ligand contact to NAD(+). 195–196 contributes to the D-glyceraldehyde 3-phosphate binding site; sequence HG. Gln302 lines the NAD(+) pocket.

The protein belongs to the glyceraldehyde-3-phosphate dehydrogenase family. Homotetramer.

It is found in the cytoplasm. It catalyses the reaction D-glyceraldehyde 3-phosphate + phosphate + NADP(+) = (2R)-3-phospho-glyceroyl phosphate + NADPH + H(+). It carries out the reaction D-glyceraldehyde 3-phosphate + phosphate + NAD(+) = (2R)-3-phospho-glyceroyl phosphate + NADH + H(+). Its pathway is carbohydrate degradation; glycolysis; pyruvate from D-glyceraldehyde 3-phosphate: step 1/5. This chain is Glyceraldehyde-3-phosphate dehydrogenase, found in Pyrobaculum arsenaticum (strain DSM 13514 / JCM 11321 / PZ6).